The primary structure comprises 259 residues: Triosephosphate isomerase (259 aa).

Substrate is bound at residue 10–12; the sequence is NWK. The Electrophile role is filled by histidine 102. The active-site Proton acceptor is glutamate 174. Residues glycine 180, serine 220, and 241–242 each bind substrate; that span reads GG.

Belongs to the triosephosphate isomerase family. As to quaternary structure, homodimer.

Its subcellular location is the cytoplasm. It catalyses the reaction D-glyceraldehyde 3-phosphate = dihydroxyacetone phosphate. It participates in carbohydrate biosynthesis; gluconeogenesis. Its pathway is carbohydrate degradation; glycolysis; D-glyceraldehyde 3-phosphate from glycerone phosphate: step 1/1. Functionally, involved in the gluconeogenesis. Catalyzes stereospecifically the conversion of dihydroxyacetone phosphate (DHAP) to D-glyceraldehyde-3-phosphate (G3P). In Cutibacterium acnes (strain DSM 16379 / KPA171202) (Propionibacterium acnes), this protein is Triosephosphate isomerase.